Reading from the N-terminus, the 533-residue chain is Probable fucosyltransferase 5 (533 aa).

Residues Met-1–Lys-13 lie on the Cytoplasmic side of the membrane. Residues Thr-14–Leu-34 form a helical; Signal-anchor for type II membrane protein membrane-spanning segment. At Ser-35 to Phe-533 the chain is on the lumenal side. N-linked (GlcNAc...) asparagine glycans are attached at residues Asn-202, Asn-227, Asn-374, Asn-396, and Asn-475.

Belongs to the glycosyltransferase 37 family. In terms of tissue distribution, expressed in roots, leaves, flowers and siliques.

The protein localises to the golgi apparatus. Its subcellular location is the golgi stack membrane. Its pathway is protein modification; protein glycosylation. In terms of biological role, may be involved in cell wall biosynthesis. May act as a fucosyltransferase. The polypeptide is Probable fucosyltransferase 5 (FUT5) (Arabidopsis thaliana (Mouse-ear cress)).